Reading from the N-terminus, the 280-residue chain is Polyamine aminopropyltransferase 2 (280 aa).

The region spanning glutamate 2 to lysine 237 is the PABS domain. S-methyl-5'-thioadenosine is bound at residue glutamine 33. Residues histidine 64 and aspartate 88 each contribute to the spermidine site. Residues glutamate 108 and aspartate 139–glycine 140 contribute to the S-methyl-5'-thioadenosine site. The active-site Proton acceptor is aspartate 157. A spermidine-binding site is contributed by aspartate 157–aspartate 160. Proline 164 lines the S-methyl-5'-thioadenosine pocket.

Belongs to the spermidine/spermine synthase family. Homodimer or homotetramer.

The protein localises to the cytoplasm. The catalysed reaction is S-adenosyl 3-(methylsulfanyl)propylamine + putrescine = S-methyl-5'-thioadenosine + spermidine + H(+). It functions in the pathway amine and polyamine biosynthesis; spermidine biosynthesis; spermidine from putrescine: step 1/1. Its function is as follows. Catalyzes the irreversible transfer of a propylamine group from the amino donor S-adenosylmethioninamine (decarboxy-AdoMet) to putrescine (1,4-diaminobutane) to yield spermidine. The sequence is that of Polyamine aminopropyltransferase 2 from Leptospira interrogans serogroup Icterohaemorrhagiae serovar Lai (strain 56601).